The sequence spans 163 residues: Probable ribosome biogenesis protein RLP24 (163 aa).

Belongs to the eukaryotic ribosomal protein eL24 family. As to quaternary structure, associated with nucleolar and cytoplasmic pre-60S particles. At the end of biogenesis it dissociates from cytoplasmic pre-60S particles and is likely to be exchanged for its ribosomal homolog, RPL24.

Its subcellular location is the nucleus. The protein localises to the nucleolus. In terms of biological role, involved in the biogenesis of the 60S ribosomal subunit. Ensures the docking of GTPBP4/NOG1 to pre-60S particles. The sequence is that of Probable ribosome biogenesis protein RLP24 (Rsl24d1) from Rattus norvegicus (Rat).